A 1573-amino-acid polypeptide reads, in one-letter code: Pentafunctional AROM polypeptide (1573 aa).

The interval 1–384 (MSNESNIITV…YEKHATVVSD (384 aa)) is 3-dehydroquinate synthase. Residues 46–48 (DSN), 83–86 (ESSK), 114–116 (GGV), and Asp-119 each bind NAD(+). Residue Arg-130 participates in 7-phospho-2-dehydro-3-deoxy-D-arabino-heptonate binding. 139–140 (TT) is an NAD(+) binding site. 7-phospho-2-dehydro-3-deoxy-D-arabino-heptonate is bound by residues Asp-146 and Lys-152. Lys-161 contacts NAD(+). Asn-162 contacts 7-phospho-2-dehydro-3-deoxy-D-arabino-heptonate. NAD(+) contacts are provided by residues 179–182 (FLHT) and Asn-190. Glu-194 lines the Zn(2+) pocket. 7-phospho-2-dehydro-3-deoxy-D-arabino-heptonate contacts are provided by residues 194–197 (EIIK) and Lys-250. Glu-260 serves as the catalytic Proton acceptor; for 3-dehydroquinate synthase activity. Residues 264–268 (RNLLN) and His-271 each bind 7-phospho-2-dehydro-3-deoxy-D-arabino-heptonate. His-271 lines the Zn(2+) pocket. The active-site Proton acceptor; for 3-dehydroquinate synthase activity is His-275. Positions 287 and 356 each coordinate 7-phospho-2-dehydro-3-deoxy-D-arabino-heptonate. His-287 lines the Zn(2+) pocket. An EPSP synthase region spans residues 397-843 (VDEFTKSSWD…WDVLHQSFGV (447 aa)). The active-site For EPSP synthase activity is the Cys-825. Residues 863 to 1058 (NASIILIGMR…KTKKRSTFLT (196 aa)) are shikimate kinase. Residue 870–877 (GMRGAGKT) participates in ATP binding. The segment at 1059–1280 (LNYPRIEDAL…AAPGQLTVKQ (222 aa)) is 3-dehydroquinase. His-1182 serves as the catalytic Proton acceptor; for 3-dehydroquinate dehydratase activity. Residue Lys-1211 is the Schiff-base intermediate with substrate; for 3-dehydroquinate dehydratase activity of the active site. Residues 1293 to 1573 (PEKFFLFGKP…FDAVYQKVIE (281 aa)) form a shikimate dehydrogenase region.

This sequence in the N-terminal section; belongs to the sugar phosphate cyclases superfamily. Dehydroquinate synthase family. It in the 2nd section; belongs to the EPSP synthase family. In the 3rd section; belongs to the shikimate kinase family. The protein in the 4th section; belongs to the type-I 3-dehydroquinase family. This sequence in the C-terminal section; belongs to the shikimate dehydrogenase family. Homodimer. Zn(2+) is required as a cofactor.

The protein localises to the cytoplasm. The enzyme catalyses 7-phospho-2-dehydro-3-deoxy-D-arabino-heptonate = 3-dehydroquinate + phosphate. The catalysed reaction is 3-dehydroquinate = 3-dehydroshikimate + H2O. It catalyses the reaction shikimate + NADP(+) = 3-dehydroshikimate + NADPH + H(+). It carries out the reaction shikimate + ATP = 3-phosphoshikimate + ADP + H(+). The enzyme catalyses 3-phosphoshikimate + phosphoenolpyruvate = 5-O-(1-carboxyvinyl)-3-phosphoshikimate + phosphate. It functions in the pathway metabolic intermediate biosynthesis; chorismate biosynthesis; chorismate from D-erythrose 4-phosphate and phosphoenolpyruvate: step 2/7. Its pathway is metabolic intermediate biosynthesis; chorismate biosynthesis; chorismate from D-erythrose 4-phosphate and phosphoenolpyruvate: step 3/7. The protein operates within metabolic intermediate biosynthesis; chorismate biosynthesis; chorismate from D-erythrose 4-phosphate and phosphoenolpyruvate: step 4/7. It participates in metabolic intermediate biosynthesis; chorismate biosynthesis; chorismate from D-erythrose 4-phosphate and phosphoenolpyruvate: step 5/7. It functions in the pathway metabolic intermediate biosynthesis; chorismate biosynthesis; chorismate from D-erythrose 4-phosphate and phosphoenolpyruvate: step 6/7. The AROM polypeptide catalyzes 5 consecutive enzymatic reactions in prechorismate polyaromatic amino acid biosynthesis. This chain is Pentafunctional AROM polypeptide, found in Schizosaccharomyces pombe (strain 972 / ATCC 24843) (Fission yeast).